Here is a 153-residue protein sequence, read N- to C-terminus: ORM1-like protein 2 (153 aa).

Over 1 to 21 (MNVGVAHSEVNPNTRVMNSRG) the chain is Cytoplasmic. The next 2 membrane-spanning stretches (helical) occupy residues 22–42 (IWLAYIILVGLLHVVLLSIPF) and 43–63 (FSIPVVWTLTNVIHNLAMYIF). Over 64–105 (LHTVKGTPFETPDQGKARLLTHWEQMDYGLQFTSSRKFLSIS) the chain is Cytoplasmic. A helical membrane pass occupies residues 106 to 126 (PIVLYLLASFYTKYDAAHFLI). The Extracellular segment spans residues 127–153 (NTASLLSVLLPKLPQFHGVRLFGINKY).

This sequence belongs to the ORM family. As to quaternary structure, ceramide-sensitive subunit of the serine palmitoyltransferase (SPT) complex, which is also composed of SPTLC1, SPTLC2/3 and SPTSSA/B.

The protein resides in the endoplasmic reticulum membrane. Functionally, plays an essential role in the homeostatic regulation of sphingolipid de novo biosynthesis by modulating the activity of the serine palmitoyltransferase (SPT) in response to ceramide levels. When complexed to SPT, the binding of ceramides to its N-terminus stabilizes a conformation that block SPT substrate entry, hence preventing SPT catalytic activity. Through this mechanism, maintains ceramide levels at sufficient concentrations for the production of complex sphingolipids, but which prevents the accumulation of ceramides to levels that trigger apoptosis. The chain is ORM1-like protein 2 (Ormdl2) from Mus musculus (Mouse).